The primary structure comprises 517 residues: Gamma-1-syntrophin (517 aa).

The region spanning 57 to 140 (TVTIRRQTVG…EVTLTVSFLK (84 aa)) is the PDZ domain. The region spanning 283-390 (QIVYMGWCEA…WERAFQTATF (108 aa)) is the PH domain.

Belongs to the syntrophin family. Interacts with the dystrophin protein DMD and related proteins DTNA and DTNB. Interacts with DGKZ.

The protein resides in the cytoplasm. It localises to the cytoskeleton. It is found in the nucleus. Its function is as follows. Adapter protein that binds to and probably organizes the subcellular localization of a variety of proteins. May link various receptors to the actin cytoskeleton and the dystrophin glycoprotein complex. May participate in regulating the subcellular location of diacylglycerol kinase-zeta to ensure that diacylglycerol is rapidly inactivated following receptor activation. This Mus musculus (Mouse) protein is Gamma-1-syntrophin (Sntg1).